A 165-amino-acid chain; its full sequence is Xanthine-guanine phosphoribosyltransferase (165 aa).

5-phospho-alpha-D-ribose 1-diphosphate contacts are provided by residues 41-42 and 98-106; these read RG and DDLTDTGKT. Aspartate 99 contributes to the Mg(2+) binding site. Residues aspartate 102 and isoleucine 145 each coordinate guanine. 2 residues coordinate xanthine: aspartate 102 and isoleucine 145. GMP contacts are provided by residues 102–106 and 144–145; these read DTGKT and WI.

It belongs to the purine/pyrimidine phosphoribosyltransferase family. XGPT subfamily. In terms of assembly, homotetramer. Requires Mg(2+) as cofactor.

Its subcellular location is the cell inner membrane. The catalysed reaction is GMP + diphosphate = guanine + 5-phospho-alpha-D-ribose 1-diphosphate. It carries out the reaction XMP + diphosphate = xanthine + 5-phospho-alpha-D-ribose 1-diphosphate. The enzyme catalyses IMP + diphosphate = hypoxanthine + 5-phospho-alpha-D-ribose 1-diphosphate. It participates in purine metabolism; GMP biosynthesis via salvage pathway; GMP from guanine: step 1/1. Its pathway is purine metabolism; XMP biosynthesis via salvage pathway; XMP from xanthine: step 1/1. In terms of biological role, purine salvage pathway enzyme that catalyzes the transfer of the ribosyl-5-phosphate group from 5-phospho-alpha-D-ribose 1-diphosphate (PRPP) to the N9 position of the 6-oxopurines guanine and xanthine to form the corresponding ribonucleotides GMP (guanosine 5'-monophosphate) and XMP (xanthosine 5'-monophosphate), with the release of PPi. To a lesser extent, also acts on hypoxanthine. The protein is Xanthine-guanine phosphoribosyltransferase of Brucella canis (strain ATCC 23365 / NCTC 10854 / RM-666).